The chain runs to 1019 residues: UPF0182 protein Krad_1193 (1019 aa).

7 helical membrane-spanning segments follow: residues 19–39, 61–81, 115–135, 169–189, 213–233, 264–284, and 291–311; these read GAAL…VVGA, LWLQ…AVAV, RLVV…VAMS, WLAF…IAGL, VHLA…YWLD, AILA…AVGT, and IGTG…PWAV. 2 disordered regions span residues 897-934 and 977-1019; these read GNSG…ATGD and DAAS…TPTP. The segment covering 977 to 1005 has biased composition (low complexity); it reads DAASAAEARLERSGTSGPTSSSSPSASSA. The segment covering 1006–1019 has biased composition (pro residues); sequence PPVPGETPAATPTP.

Belongs to the UPF0182 family.

It is found in the cell membrane. The polypeptide is UPF0182 protein Krad_1193 (Kineococcus radiotolerans (strain ATCC BAA-149 / DSM 14245 / SRS30216)).